The sequence spans 374 residues: Anhydro-N-acetylmuramic acid kinase (374 aa).

Residue 9–16 participates in ATP binding; that stretch reads GTSLDGID.

It belongs to the anhydro-N-acetylmuramic acid kinase family.

The catalysed reaction is 1,6-anhydro-N-acetyl-beta-muramate + ATP + H2O = N-acetyl-D-muramate 6-phosphate + ADP + H(+). It participates in amino-sugar metabolism; 1,6-anhydro-N-acetylmuramate degradation. It functions in the pathway cell wall biogenesis; peptidoglycan recycling. Catalyzes the specific phosphorylation of 1,6-anhydro-N-acetylmuramic acid (anhMurNAc) with the simultaneous cleavage of the 1,6-anhydro ring, generating MurNAc-6-P. Is required for the utilization of anhMurNAc either imported from the medium or derived from its own cell wall murein, and thus plays a role in cell wall recycling. The chain is Anhydro-N-acetylmuramic acid kinase from Methylobacterium nodulans (strain LMG 21967 / CNCM I-2342 / ORS 2060).